A 1051-amino-acid polypeptide reads, in one-letter code: Transcription intermediary factor 1-alpha (1051 aa).

The interval 1–42 (MEVAVEKAAAAAAPAGGPAAAAPSGENEAESRQGPDSESGGE) is disordered. A Glycyl lysine isopeptide (Lys-Gly) (interchain with G-Cter in SUMO2) cross-link involves residue Lys-7. Low complexity predominate over residues 8 to 23 (AAAAAAPAGGPAAAAP). The RING-type zinc-finger motif lies at 52–77 (CAVCHQNIQSRVPKLLPCLHSFCQRC). The segment at 94–115 (SAETPPPAPAPAPAPGSPAGGP) is disordered. Thr-97 is modified (phosphothreonine). Residues 97–109 (TPPPAPAPAPAPG) show a composition bias toward pro residues. Ser-110 bears the Phosphoserine mark. 2 consecutive B box-type zinc fingers follow at residues 158-211 (KSNQ…VSPE) and 218-259 (QRPV…YQFI). Cys-163, Cys-166, Cys-187, and His-200 together coordinate Zn(2+). Lys-205 is covalently cross-linked (Glycyl lysine isopeptide (Lys-Gly) (interchain with G-Cter in SUMO2)). Positions 223, 226, 246, and 251 each coordinate Zn(2+). A Glycyl lysine isopeptide (Lys-Gly) (interchain with G-Cter in SUMO2) cross-link involves residue Lys-276. A coiled-coil region spans residues 289 to 359 (NQIQNRIIEI…AGLSKQLEHV (71 aa)). The tract at residues 429–457 (ESQPQMPKQNPVVEQSSQPPGGLPSNQLS) is disordered. A compositionally biased stretch (polar residues) spans 431 to 457 (QPQMPKQNPVVEQSSQPPGGLPSNQLS). Residues Lys-436 and Lys-458 each participate in a glycyl lysine isopeptide (Lys-Gly) (interchain with G-Cter in SUMO2) cross-link. Position 469 is an omega-N-methylarginine (Arg-469). 2 stretches are compositionally biased toward low complexity: residues 479–490 (AQRQQVQRRPAP) and 501–510 (PIQQPSISHQ). Residues 479 to 551 (AQRQQVQRRP…PSQNVPRQTT (73 aa)) form a disordered region. Over residues 526-535 (PNGPVLPPYP) the composition is skewed to pro residues. Polar residues predominate over residues 538–551 (LRYSPSQNVPRQTT). Glycyl lysine isopeptide (Lys-Gly) (interchain with G-Cter in SUMO2) cross-links involve residues Lys-553 and Lys-642. A disordered region spans residues 644-713 (TGVDHAQPRP…PAGADSTHKV (70 aa)). Phosphoserine occurs at positions 655, 661, and 668. A compositionally biased stretch (polar residues) spans 655–667 (SNRTVQSPNSSVP). Positions 686–708 (SPSASSVGSRGSSGSSSKPAGAD) are enriched in low complexity. Residues Lys-703 and Lys-712 each participate in a glycyl lysine isopeptide (Lys-Gly) (interchain with G-Cter in SUMO2) cross-link. Residues Lys-724 and Lys-742 each participate in a glycyl lysine isopeptide (Lys-Gly) (interchain with G-Cter in SUMO); alternate cross-link. Lys-724 participates in a covalent cross-link: Glycyl lysine isopeptide (Lys-Gly) (interchain with G-Cter in SUMO1); alternate. Glycyl lysine isopeptide (Lys-Gly) (interchain with G-Cter in SUMO2); alternate cross-links involve residues Lys-724 and Lys-742. Phosphoserine is present on residues Ser-745 and Ser-769. The segment at 755-780 (NYPRSILTSLLLNSSQSSASEETVLR) is nuclear receptor binding site (NRBS). Residues 771–827 (SSASEETVLRSDAPDSTGDQPGLHQENSSNGKSEWSDASQKSPVHVGETRKEDDPNE) form a disordered region. A compositionally biased stretch (polar residues) spans 795–812 (QENSSNGKSEWSDASQKS). Lys-802 participates in a covalent cross-link: Glycyl lysine isopeptide (Lys-Gly) (interchain with G-Cter in SUMO2). A Phosphoserine modification is found at Ser-809. Residue Lys-811 forms a Glycyl lysine isopeptide (Lys-Gly) (interchain with G-Cter in SUMO2) linkage. At Ser-812 the chain carries Phosphoserine. Phosphothreonine is present on Thr-819. A PHD-type zinc finger spans residues 827–874 (EDWCAVCQNGGELLCCEKCPKVFHLTCHVPTLTNFPSGEWICTFCRDL). The interval 835-841 (NGGELLC) is interaction with histone H3 that is not methylated at 'Lys-4' (H3K4me0). Lys-876 participates in a covalent cross-link: Glycyl lysine isopeptide (Lys-Gly) (interchain with G-Cter in SUMO2). Positions 892 to 908 (KRKSEGLTKLTPIDKRK) match the Nuclear localization signal motif. The 106-residue stretch at 900–1005 (KLTPIDKRKC…SYFEELLKNL (106 aa)) folds into the Bromo domain. Residues Lys-950 and Lys-993 each participate in a glycyl lysine isopeptide (Lys-Gly) (interchain with G-Cter in SUMO2) cross-link. A disordered region spans residues 1024 to 1051 (KFSDDSDDDFVQPRKKRLKSTEDRQLLK). Ser-1026 and Ser-1029 each carry phosphoserine. Lys-1042 is covalently cross-linked (Glycyl lysine isopeptide (Lys-Gly) (interchain with G-Cter in SUMO2)). Over residues 1042–1051 (KSTEDRQLLK) the composition is skewed to basic and acidic residues. A Phosphoserine modification is found at Ser-1043.

As to quaternary structure, interacts (via bromo domain) with histone H3 (via N-terminus), provided that it is not methylated at 'Lys-4' (H3K4me0). Does not interact with histone H3 that is methylated at 'Lys-4' (H3K4me1, H3K4me2 or H3K4me3). Interacts (via bromo domain) with histone H3 (via N-terminus) that is acetylated at 'Lys-23' (H3K23ac). Has the highest affinity for histone H3 that is both unmodified at 'Lys-4' (H3K4me0) and acetylated at 'Lys-23' (H3K23ac). Has very low affinity for histone H3 that is methylated at 'Lys-9' (H3K9me), or acetylated at both 'Lys-9' (H3K9ac) and 'Lys-14' (H3K14ac), or acetylated at 'Lys-27' (H3K27ac) (in vitro). Interacts with TRIM16. Interacts with NR3C2/MCR. Interacts with the ligand-binding domain of estrogen receptors (in vitro). Interaction with DNA-bound estrogen receptors requires the presence of estradiol. Interacts with AR, CARM1, KAT5/TIP60, NCOA2/GRIP1, BRD7, CBX1, CBX3 and CBX5. Part of a coactivator complex containing TRIM24, NCOA2/GRIP1 and CARM1. Interacts with p53/TP53 and PML. Post-translationally, sumoylated. Phosphorylated at Ser-768 by ATM kinase induces ubiquitination and degradation during DNA damage. In terms of processing, undergoes ubiquitination-mediated degradation in response to DNA damage. Detected in embryonic and adult liver. Detected in zygote and throughout embryogenesis (at protein level). Detected in all adult tissues, with the highest expression level in testis.

The protein localises to the nucleus. Its subcellular location is the cytoplasm. The catalysed reaction is S-ubiquitinyl-[E2 ubiquitin-conjugating enzyme]-L-cysteine + [acceptor protein]-L-lysine = [E2 ubiquitin-conjugating enzyme]-L-cysteine + N(6)-ubiquitinyl-[acceptor protein]-L-lysine.. It functions in the pathway protein modification; protein ubiquitination. Its function is as follows. Transcriptional coactivator that interacts with numerous nuclear receptors and coactivators and modulates the transcription of target genes. Interacts with chromatin depending on histone H3 modifications, having the highest affinity for histone H3 that is both unmodified at 'Lys-4' (H3K4me0) and acetylated at 'Lys-23' (H3K23ac). Has E3 protein-ubiquitin ligase activity. Promotes ubiquitination and proteasomal degradation of p53/TP53. Plays a role in the regulation of cell proliferation and apoptosis via its effects on p53/TP53 levels. Up-regulates ligand-dependent transcription activation by AR, GCR/NR3C1, thyroid hormone receptor (TR) and ESR1. Modulates transcription activation by retinoic acid (RA) receptors, such as RARA. Plays a role in regulating retinoic acid-dependent proliferation of hepatocytes. Required for normal transition from proliferating neonatal hepatocytes to quiescent adult hepatocytes. In terms of biological role, transcriptional coactivator that interacts with numerous nuclear receptors and coactivators and modulates the transcription of target genes. Interacts with chromatin depending on histone H3 modifications, having the highest affinity for histone H3 that is both unmodified at 'Lys-4' (H3K4me0) and acetylated at 'Lys-23' (H3K23ac). Has E3 protein-ubiquitin ligase activity. During the DNA damage response, participates in an autoregulatory feedback loop with TP53. Early in response to DNA damage, ATM kinase phosphorylates TRIM24 leading to its ubiquitination and degradation. After sufficient DNA repair has occurred, TP53 activates TRIM24 transcription, ultimately leading to TRIM24-mediated TP53 ubiquitination and degradation. Plays a role in the regulation of cell proliferation and apoptosis, at least in part via its effects on p53/TP53 levels. Up-regulates ligand-dependent transcription activation by AR, GCR/NR3C1, thyroid hormone receptor (TR) and ESR1. Modulates transcription activation by retinoic acid (RA) receptors, including RARA. Plays a role in regulating retinoic acid-dependent proliferation of hepatocytes. Also participates in innate immunity by mediating the specific 'Lys-63'-linked ubiquitination of TRAF3 leading to activation of downstream signal transduction of the type I IFN pathway. Additionally, negatively regulates NLRP3/CASP1/IL-1beta-mediated pyroptosis and cell migration probably by ubiquitinating NLRP3. This Mus musculus (Mouse) protein is Transcription intermediary factor 1-alpha (Trim24).